The following is a 405-amino-acid chain: L-carnitine CoA-transferase (405 aa).

2 residues coordinate CoA: Lys-97 and Arg-104. The active-site Nucleophile is Asp-169.

This sequence belongs to the CoA-transferase III family. CaiB subfamily. As to quaternary structure, homodimer.

Its subcellular location is the cytoplasm. It catalyses the reaction crotonobetainyl-CoA + (R)-carnitine = crotonobetaine + (R)-carnitinyl-CoA. The enzyme catalyses 4-(trimethylamino)butanoyl-CoA + (R)-carnitine = (R)-carnitinyl-CoA + 4-(trimethylamino)butanoate. It participates in amine and polyamine metabolism; carnitine metabolism. Its function is as follows. Catalyzes the reversible transfer of the CoA moiety from gamma-butyrobetainyl-CoA to L-carnitine to generate L-carnitinyl-CoA and gamma-butyrobetaine. Is also able to catalyze the reversible transfer of the CoA moiety from gamma-butyrobetainyl-CoA or L-carnitinyl-CoA to crotonobetaine to generate crotonobetainyl-CoA. In Salmonella choleraesuis (strain SC-B67), this protein is L-carnitine CoA-transferase.